A 168-amino-acid chain; its full sequence is Photosystem I assembly protein Ycf3 (168 aa).

TPR repeat units follow at residues alanine 35 to proline 68, serine 72 to leucine 105, and glycine 120 to asparagine 153.

Belongs to the Ycf3 family.

The protein localises to the plastid. It localises to the chloroplast thylakoid membrane. Essential for the assembly of the photosystem I (PSI) complex. May act as a chaperone-like factor to guide the assembly of the PSI subunits. In Nuphar advena (Common spatterdock), this protein is Photosystem I assembly protein Ycf3.